Consider the following 570-residue polypeptide: Sulfite reductase [NADPH] hemoprotein beta-component (570 aa).

[4Fe-4S] cluster is bound by residues cysteine 434, cysteine 440, cysteine 479, and cysteine 483. Cysteine 483 is a binding site for siroheme.

The protein belongs to the nitrite and sulfite reductase 4Fe-4S domain family. In terms of assembly, alpha(8)-beta(8). The alpha component is a flavoprotein, the beta component is a hemoprotein. It depends on siroheme as a cofactor. The cofactor is [4Fe-4S] cluster.

The enzyme catalyses hydrogen sulfide + 3 NADP(+) + 3 H2O = sulfite + 3 NADPH + 4 H(+). The protein operates within sulfur metabolism; hydrogen sulfide biosynthesis; hydrogen sulfide from sulfite (NADPH route): step 1/1. In terms of biological role, component of the sulfite reductase complex that catalyzes the 6-electron reduction of sulfite to sulfide. This is one of several activities required for the biosynthesis of L-cysteine from sulfate. This is Sulfite reductase [NADPH] hemoprotein beta-component from Salmonella newport (strain SL254).